The chain runs to 531 residues: Transactivator/viroplasmin protein (531 aa).

Disordered regions lie at residues 80 to 101 (ASGK…TATG) and 505 to 531 (CKSE…SVLV). 2 stretches are compositionally biased toward polar residues: residues 91–100 (SATSPEQTAT) and 505–517 (CKSE…TSEE). Over residues 518-531 (GLQESEDEDFSVLV) the composition is skewed to acidic residues.

Belongs to the caulimoviridae viroplasmin family.

It localises to the host cytoplasm. In terms of biological role, enhances the translation of downstream ORFs on polycistronic mRNAs. The sequence is that of Transactivator/viroplasmin protein from Cestrum yellow leaf curling virus (CmYLCV).